Consider the following 278-residue polypeptide: Neuronal membrane glycoprotein M6-a (278 aa).

Met-1 carries the N-acetylmethionine modification. Topologically, residues Met-1 to Leu-22 are cytoplasmic. Residues Gly-23 to Phe-43 form a helical membrane-spanning segment. Residues Cys-44 to Val-84 are Extracellular-facing. Residues Ile-85–Phe-105 traverse the membrane as a helical segment. The Cytoplasmic portion of the chain corresponds to Thr-106–Ser-127. Residues Ala-128 to Thr-148 traverse the membrane as a helical segment. At Ser-149–Leu-213 the chain is on the extracellular side. Asn-164 carries an N-linked (GlcNAc...) asparagine glycan. A disulfide bridge links Cys-174 with Cys-192. An N-linked (GlcNAc...) asparagine glycan is attached at Asn-208. A helical membrane pass occupies residues Phe-214–Val-234. Residues Leu-235 to Thr-278 lie on the Cytoplasmic side of the membrane. The residue at position 256 (Ser-256) is a Phosphoserine. Residue Thr-278 is modified to Phosphothreonine.

It belongs to the myelin proteolipid protein family. As to quaternary structure, interacts with OPRM1. Interacts with palmitoyltransferase ZDHHC17/HIP14; the interaction leads to palmitoylation of GPM6A. Post-translationally, N-glycosylated. Palmitoylated by ZDHHC17/HIP14.

The protein localises to the cell membrane. The protein resides in the cell projection. It localises to the axon. Its subcellular location is the growth cone. It is found in the dendritic spine. The protein localises to the filopodium. The protein resides in the neuron projection. Involved in neuronal differentiation, including differentiation and migration of neuronal stem cells. Plays a role in neuronal plasticity and is involved in neurite and filopodia outgrowth, filopodia motility and probably synapse formation. GPM6A-induced filopodia formation involves mitogen-activated protein kinase (MAPK) and Src signaling pathways. May be involved in neuronal NGF-dependent Ca(2+) influx. May be involved in regulation of endocytosis and intracellular trafficking of G-protein-coupled receptors (GPCRs); may enhance internalization and recycling of mu-type opioid receptor. This Bos taurus (Bovine) protein is Neuronal membrane glycoprotein M6-a (GPM6A).